The chain runs to 522 residues: Nuclear pore glycoprotein p62 (522 aa).

Ser-2 carries the N-acetylserine modification. 5 repeat units span residues 6–7, 44–45, 76–77, 114–115, and 142–143. A 5 X 2 AA repeats of F-G region spans residues 6-143; it reads FGGTGAPTGG…GTAPTGFVFG (138 aa). A compositionally biased stretch (polar residues) spans 169 to 179; sequence SGFNIGSAGNS. 2 disordered regions span residues 169 to 215 and 260 to 288; these read SGFN…ATIT and APGA…SSTT. Low complexity-rich tracts occupy residues 180–215 and 262–288; these read AQPT…ATIT and GAAS…SSTT. Positions 328-458 are required for centrosome localization; sequence MTYAQLESLI…QDLKDIIEHL (131 aa). Residues 328 to 458 adopt a coiled-coil conformation; it reads MTYAQLESLI…QDLKDIIEHL (131 aa). Thr-373 carries O-linked (GlcNAc) threonine glycosylation. Residues Ser-408 and Ser-418 each carry the phosphoserine modification. O-linked (GlcNAc) serine glycosylation is present at Ser-468.

The protein belongs to the nucleoporin NSP1/NUP62 family. Component of the p62 complex, a complex at least composed of NUP62, NUP54, and NUP58. Interacts with NUP88. Interacts with NUTF2. Interacts with HIKESHI. Interacts with OSBPL8. Interacts with CAPG. Interacts with SAS6 and TUBG1 at the centrosome. Interacts with MCM3AP isoform GANP. In terms of assembly, (Microbial infection) Interacts with Epstein-barr virus BGLF4; this interaction allows BGLF4 nuclear entry. In terms of processing, O-glycosylated. Contains about 10 N-acetylglucosamine side chain sites predicted for the entire protein, among which only one in the C-terminal. Post-translationally, the inner channel of the NPC has a different redox environment from the cytoplasm and allows the formation of interchain disulfide bonds between some nucleoporins, the significant increase of these linkages upon oxidative stress reduces the permeability of the NPC.

It is found in the nucleus. Its subcellular location is the nuclear pore complex. The protein resides in the cytoplasm. The protein localises to the cytoskeleton. It localises to the spindle pole. It is found in the nucleus envelope. Its subcellular location is the microtubule organizing center. The protein resides in the centrosome. In terms of biological role, essential component of the nuclear pore complex. The N-terminal is probably involved in nucleocytoplasmic transport. The C-terminal is involved in protein-protein interaction probably via coiled-coil formation, promotes its association with centrosomes and may function in anchorage of p62 to the pore complex. Plays a role in mitotic cell cycle progression by regulating centrosome segregation, centriole maturation and spindle orientation. It might be involved in protein recruitment to the centrosome after nuclear breakdown. The sequence is that of Nuclear pore glycoprotein p62 (NUP62) from Homo sapiens (Human).